We begin with the raw amino-acid sequence, 427 residues long: Citrate synthase (427 aa).

An N6-acetyllysine modification is found at Lys-283. Active-site residues include His-306 and Asp-363.

It belongs to the citrate synthase family. In terms of assembly, homohexamer.

The catalysed reaction is oxaloacetate + acetyl-CoA + H2O = citrate + CoA + H(+). It functions in the pathway carbohydrate metabolism; tricarboxylic acid cycle; isocitrate from oxaloacetate: step 1/2. This chain is Citrate synthase (gltA), found in Escherichia coli O6:H1 (strain CFT073 / ATCC 700928 / UPEC).